The chain runs to 203 residues: Large ribosomal subunit protein bL25 (203 aa).

It belongs to the bacterial ribosomal protein bL25 family. CTC subfamily. In terms of assembly, part of the 50S ribosomal subunit; part of the 5S rRNA/L5/L18/L25 subcomplex. Contacts the 5S rRNA. Binds to the 5S rRNA independently of L5 and L18.

Its function is as follows. This is one of the proteins that binds to the 5S RNA in the ribosome where it forms part of the central protuberance. The sequence is that of Large ribosomal subunit protein bL25 from Paraburkholderia phymatum (strain DSM 17167 / CIP 108236 / LMG 21445 / STM815) (Burkholderia phymatum).